A 340-amino-acid chain; its full sequence is uncharacterized protein (340 aa).

Transmembrane regions (helical) follow at residues 162 to 182 and 239 to 259; these read PLVP…VLAG and FWIS…IVVP.

It localises to the cell membrane. This is an uncharacterized protein from Mycobacterium bovis (strain ATCC BAA-935 / AF2122/97).